A 304-amino-acid chain; its full sequence is Serine/threonine-protein phosphatase PP1 isozyme 3 (304 aa).

Mn(2+)-binding residues include Asp-61, His-63, Asp-89, and Asn-121. Catalysis depends on His-122, which acts as the Proton donor. Residues His-170 and His-245 each contribute to the Mn(2+) site.

It belongs to the PPP phosphatase family. PP-1 subfamily. Mn(2+) is required as a cofactor.

It catalyses the reaction O-phospho-L-seryl-[protein] + H2O = L-seryl-[protein] + phosphate. The enzyme catalyses O-phospho-L-threonyl-[protein] + H2O = L-threonyl-[protein] + phosphate. This chain is Serine/threonine-protein phosphatase PP1 isozyme 3 (NPP3), found in Nicotiana tabacum (Common tobacco).